Reading from the N-terminus, the 41-residue chain is Omega-theraphotoxin-Hg1a (41 aa).

Cystine bridges form between C7-C21, C14-C26, and C20-C33.

The protein belongs to the neurotoxin 10 (Hwtx-1) family. 56 (SNX-482) subfamily. In terms of tissue distribution, expressed by the venom gland.

It is found in the secreted. Toxin that blocks vertebrate P/Q-type (Cav2.1/CACNA1A) and R-type (Cav2.3/CACNA1E) voltage-gated calcium channels. Also inhibits sodium channels (Nav) in bovine chromaffin cells by delaying sodium channel inactivation. The sequence is that of Omega-theraphotoxin-Hg1a from Hysterocrates gigas (Cameroon red baboon tarantula).